A 189-amino-acid polypeptide reads, in one-letter code: Peptidyl-tRNA hydrolase (189 aa).

TRNA is bound at residue tyrosine 14. Catalysis depends on histidine 19, which acts as the Proton acceptor. 3 residues coordinate tRNA: tyrosine 64, asparagine 66, and asparagine 112.

It belongs to the PTH family. As to quaternary structure, monomer.

The protein resides in the cytoplasm. It carries out the reaction an N-acyl-L-alpha-aminoacyl-tRNA + H2O = an N-acyl-L-amino acid + a tRNA + H(+). In terms of biological role, hydrolyzes ribosome-free peptidyl-tRNAs (with 1 or more amino acids incorporated), which drop off the ribosome during protein synthesis, or as a result of ribosome stalling. Catalyzes the release of premature peptidyl moieties from peptidyl-tRNA molecules trapped in stalled 50S ribosomal subunits, and thus maintains levels of free tRNAs and 50S ribosomes. In Clostridium botulinum (strain Okra / Type B1), this protein is Peptidyl-tRNA hydrolase.